We begin with the raw amino-acid sequence, 346 residues long: Hydroxycarboxylic acid receptor 1 (346 aa).

At 1–21 (MYNGSCCRIEGDTISQVMPPL) the chain is on the extracellular side. An N-linked (GlcNAc...) asparagine glycan is attached at Asn-3. Residues 22-42 (LIVAFVLGALGNGVALCGFCF) traverse the membrane as a helical segment. The Cytoplasmic portion of the chain corresponds to 43-49 (HMKTWKP). A helical transmembrane segment spans residues 50-70 (STVYLFNLAVADFLLMICLPF). The Extracellular portion of the chain corresponds to 71 to 89 (RTDYYLRRRHWAFGDIPCR). Residues Cys-88 and Cys-165 are joined by a disulfide bond. A helical membrane pass occupies residues 90 to 110 (VGLFTLAMNRAGSIVFLTVVA). Residues 111 to 130 (ADRYFKVVHPHHAVNTISTR) lie on the Cytoplasmic side of the membrane. Residues 131–151 (VAAGIVCTLWALVILGTVYLL) form a helical membrane-spanning segment. The Extracellular portion of the chain corresponds to 152–182 (LENHLCVQETAVSCESFIMESANGWHDIMFQ). A helical membrane pass occupies residues 183–203 (LEFFMPLGIILFCSFKIVWSL). Over 204–220 (RRRQQLARQARMKKATR) the chain is Cytoplasmic. The chain crosses the membrane as a helical span at residues 221–241 (FIMVVAIVFITCYLPSVSARL). Over 242-261 (YFLWTVPSSACDPSVHGALH) the chain is Extracellular. Residues 262–281 (ITLSFTYMNSMLDPLVYYFS) form a helical membrane-spanning segment. The Cytoplasmic portion of the chain corresponds to 282-346 (SPSFPKFYNK…QWDPHIVEWH (65 aa)).

The protein belongs to the G-protein coupled receptor 1 family. In terms of tissue distribution, expressed abundantly in brown and white fat. It also detectable at lower levels in liver, kidney, skeletal muscle, brain and pituitary. Not detected in frontal, temporal and occipital lobes of the cortex, basal forebrain, caudate nucleus, nucleus accumbens and hippocampus.

Its subcellular location is the cell membrane. Acts as a receptor for L-lactate and mediates its anti-lipolytic effect through a G(i)-protein-mediated pathway. This Homo sapiens (Human) protein is Hydroxycarboxylic acid receptor 1 (HCAR1).